The chain runs to 224 residues: dTTP/UTP pyrophosphatase (224 aa).

The Proton acceptor role is filled by aspartate 77.

The protein belongs to the Maf family. YhdE subfamily. A divalent metal cation is required as a cofactor.

It localises to the cytoplasm. It catalyses the reaction dTTP + H2O = dTMP + diphosphate + H(+). It carries out the reaction UTP + H2O = UMP + diphosphate + H(+). In terms of biological role, nucleoside triphosphate pyrophosphatase that hydrolyzes dTTP and UTP. May have a dual role in cell division arrest and in preventing the incorporation of modified nucleotides into cellular nucleic acids. This is dTTP/UTP pyrophosphatase from Dehalococcoides mccartyi (strain CBDB1).